The chain runs to 343 residues: S-adenosylmethionine:tRNA ribosyltransferase-isomerase (343 aa).

This sequence belongs to the QueA family. As to quaternary structure, monomer.

The protein localises to the cytoplasm. It carries out the reaction 7-aminomethyl-7-carbaguanosine(34) in tRNA + S-adenosyl-L-methionine = epoxyqueuosine(34) in tRNA + adenine + L-methionine + 2 H(+). Its pathway is tRNA modification; tRNA-queuosine biosynthesis. Its function is as follows. Transfers and isomerizes the ribose moiety from AdoMet to the 7-aminomethyl group of 7-deazaguanine (preQ1-tRNA) to give epoxyqueuosine (oQ-tRNA). This is S-adenosylmethionine:tRNA ribosyltransferase-isomerase from Coxiella burnetii (strain CbuG_Q212) (Coxiella burnetii (strain Q212)).